The chain runs to 364 residues: Cobalt-precorrin-5B C(1)-methyltransferase (364 aa).

Belongs to the CbiD family.

The catalysed reaction is Co-precorrin-5B + S-adenosyl-L-methionine = Co-precorrin-6A + S-adenosyl-L-homocysteine. It participates in cofactor biosynthesis; adenosylcobalamin biosynthesis; cob(II)yrinate a,c-diamide from sirohydrochlorin (anaerobic route): step 6/10. Its function is as follows. Catalyzes the methylation of C-1 in cobalt-precorrin-5B to form cobalt-precorrin-6A. The chain is Cobalt-precorrin-5B C(1)-methyltransferase from Pseudomonas putida (strain ATCC 700007 / DSM 6899 / JCM 31910 / BCRC 17059 / LMG 24140 / F1).